Consider the following 313-residue polypeptide: D-alanine--D-alanine ligase (313 aa).

An ATP-grasp domain is found at 108 to 308 (KLVWQQTGVP…YSELVVKVLS (201 aa)). Residue 138–193 (VAKLGLPLFVKPASEGSSVAVLKVKTADALPAALSEAATHDKIVIVEKSIEGGGEY) coordinates ATP. Mg(2+) contacts are provided by aspartate 262, glutamate 275, and asparagine 277.

This sequence belongs to the D-alanine--D-alanine ligase family. Mg(2+) serves as cofactor. The cofactor is Mn(2+).

It localises to the cytoplasm. It catalyses the reaction 2 D-alanine + ATP = D-alanyl-D-alanine + ADP + phosphate + H(+). Its pathway is cell wall biogenesis; peptidoglycan biosynthesis. In terms of biological role, cell wall formation. The protein is D-alanine--D-alanine ligase of Burkholderia vietnamiensis (strain G4 / LMG 22486) (Burkholderia cepacia (strain R1808)).